The sequence spans 393 residues: Cytotoxic and regulatory T-cell molecule (393 aa).

A signal peptide spans 1–17 (MWWRVLSLLAWFPLQEA). One can recognise an Ig-like V-type domain in the interval 18–114 (SLTNHTETIT…VSTKEVKVIV (97 aa)). The Extracellular portion of the chain corresponds to 18-287 (SLTNHTETIT…YLGLARKKSG (270 aa)). N-linked (GlcNAc...) asparagine glycans are attached at residues N21, N87, and N178. Intrachain disulfides connect C38–C98 and C141–C196. An Ig-like C2-type domain is found at 118–210 (PFKPILEASV…RGLQGRKLVA (93 aa)). Residues 225–273 (SDALERNSLSSQDPQQPTSTVSVTEDSSTSEIDKEEKEQTTQDPDLTTE) form a disordered region. Residues 231 to 241 (NSLSSQDPQQP) show a composition bias toward polar residues. A compositionally biased stretch (low complexity) spans 242–254 (TSTVSVTEDSSTS). Basic and acidic residues predominate over residues 255–264 (EIDKEEKEQT). Residues 288–308 (ILLLTLVSFLIFILFIIVQLF) traverse the membrane as a helical segment. Residues 309–393 (IMKLRKAHVI…KHIQVPESIV (85 aa)) lie on the Cytoplasmic side of the membrane. Composition is skewed to basic and acidic residues over residues 328–348 (HTLE…EEKN) and 374–387 (ENVQ…KHIQ). Disordered regions lie at residues 328-354 (HTLE…SSHP) and 374-393 (ENVQ…ESIV). Residues 390-393 (ESIV) carry the PDZ-binding motif.

This sequence belongs to the nectin family. Monomer. May form homodimer (via Ig-like V-type domain). Interacts (via Ig-like V-type domain) with CADM1 (via Ig-like V-type domain); the interaction competes with CRTAM homodimerization and CADM1 homodimerization. Interacts (via PDZ-binding motif) with SCRIB (via PDZ domain 3); the interaction promotes CRTAM and SCRIB polarization in a subset of CD4+ T-cells. As to expression, in the immune system, expression is restricted to activated class-I MHC-restricted cells, including NKT and CD8 T-cells. Strongly expressed in spleen, thymus, small intestine, peripheral blood leukocyte, and in Purkinje neurons in cerebellum. Expressed at much lower levels in testis, ovary, colon, lung and lymphoid tissues.

Its subcellular location is the cell membrane. Mediates heterophilic cell-cell adhesion which regulates the activation, differentiation and tissue retention of various T-cell subsets. Interaction with CADM1 promotes natural killer (NK) cell cytotoxicity and IFNG/interferon-gamma secretion by CD8+ T-cells in vitro as well as NK cell-mediated rejection of tumors expressing CADM1 in vivo. Regulates CD8+ T-cell proliferation in response to T-cell receptor (TCR) activation. Appears to be dispensable for CD8+ T-cell-mediated cytotoxicity. Interaction with SCRIB promotes the late phase of cellular polarization of a subset of CD4+ T-cells, which in turn regulates TCR-mediated proliferation and IFNG, IL17 and IL22 production. By interacting with CADM1 on CD8+ dendritic cells, regulates the retention of activated CD8+ T-cells within the draining lymph node. Required for the intestinal retention of intraepithelial CD4+ CD8+ T-cells and, to a lesser extent, intraepithelial and lamina propria CD8+ T-cells and CD4+ T-cells. Interaction with CADM1 promotes the adhesion to gut-associated CD103+ dendritic cells, which may facilitate the expression of gut-homing and adhesion molecules on T-cells and the conversion of CD4+ T-cells into CD4+ CD8+ T-cells. This chain is Cytotoxic and regulatory T-cell molecule, found in Homo sapiens (Human).